The following is a 356-amino-acid chain: Histidinol-phosphate aminotransferase (356 aa).

At Lys214 the chain carries N6-(pyridoxal phosphate)lysine.

The protein belongs to the class-II pyridoxal-phosphate-dependent aminotransferase family. Histidinol-phosphate aminotransferase subfamily. Homodimer. Pyridoxal 5'-phosphate serves as cofactor.

The catalysed reaction is L-histidinol phosphate + 2-oxoglutarate = 3-(imidazol-4-yl)-2-oxopropyl phosphate + L-glutamate. It functions in the pathway amino-acid biosynthesis; L-histidine biosynthesis; L-histidine from 5-phospho-alpha-D-ribose 1-diphosphate: step 7/9. This is Histidinol-phosphate aminotransferase from Escherichia coli O17:K52:H18 (strain UMN026 / ExPEC).